We begin with the raw amino-acid sequence, 195 residues long: MDQGMADELARLAPLLSGRIGRTIVLVGLMGAGKSCVGRRLAARLGLDFVDSDAEFEAASGSSISDYFARFGEAAFREGERKVIARLLDGPPVVLATGGGAFVDPTTRERIKAAGTSVWIRADLELLLKRTVGRDHRPLLKQGDPREILGRLMEARYPIYAEADIIVESTDEVPEATVIRVMEGLITYLDLEKTV.

31–36 (GAGKSC) provides a ligand contact to ATP. Serine 35 lines the Mg(2+) pocket. Substrate-binding residues include aspartate 53, arginine 77, and glycine 99. Residue arginine 137 participates in ATP binding. Arginine 156 is a binding site for substrate.

Belongs to the shikimate kinase family. In terms of assembly, monomer. It depends on Mg(2+) as a cofactor.

The protein localises to the cytoplasm. It carries out the reaction shikimate + ATP = 3-phosphoshikimate + ADP + H(+). Its pathway is metabolic intermediate biosynthesis; chorismate biosynthesis; chorismate from D-erythrose 4-phosphate and phosphoenolpyruvate: step 5/7. Catalyzes the specific phosphorylation of the 3-hydroxyl group of shikimic acid using ATP as a cosubstrate. This is Shikimate kinase from Paramagnetospirillum magneticum (strain ATCC 700264 / AMB-1) (Magnetospirillum magneticum).